We begin with the raw amino-acid sequence, 2753 residues long: Maltase-glucoamylase (2753 aa).

The Cytoplasmic segment spans residues 1 to 13; it reads MARKKLKKFTTLE. Residues 14–34 traverse the membrane as a helical; Signal-anchor for type II membrane protein segment; the sequence is IVLSVLLLVLFIISIVLIVLL. At 35–2753 the chain is on the lumenal side; sequence AKESLKSTAP…FTSLTWISTL (2719 aa). Residues 41-87 are disordered; the sequence is STAPDPGTTGTPDPGTTGTPDPGTTGTTHARTTGPPDPGTTGTTPVS. The segment covering 44–85 has biased composition (low complexity); sequence PDPGTTGTPDPGTTGTPDPGTTGTTHARTTGPPDPGTTGTTP. Residues 88–134 form the P-type 1 domain; that stretch reads AECPVVNELERINCIPDQPPTKATCDQRGCCWNPQGAVSVPWCYYSK. Disulfide bonds link C90–C118, C101–C117, and C112–C130. N135 is a glycosylation site (N-linked (GlcNAc...) asparagine). Residue D289 participates in acarbose binding. N-linked (GlcNAc...) asparagine glycosylation occurs at N295. Positions 356-737 are maltase; that stretch reads PEQVVQEYLE…FRAHSRGDTV (382 aa). Residue D413 participates in acarbose binding. Residues Y416 and Y425 each carry the sulfotyrosine modification. 3 N-linked (GlcNAc...) asparagine glycosylation sites follow: N457, N458, and N479. D529 serves as the catalytic Nucleophile. The active site involves E532. 2 residues coordinate acarbose: R612 and D628. A disulfide bridge links C659 with C670. Position 686 (H686) interacts with acarbose. N707, N749, N827, N885, N912, N977, N989, and N1255 each carry an N-linked (GlcNAc...) asparagine glycan. The P-type 2 domain maps to 954–1000; the sequence is WSIKIRDEEKIDCYPDENGASAENCTARGCIWEASNSSGVPFCYFVN. 2 disulfide bridges follow: C966–C983 and C978–C996. The tract at residues 1221-1632 is glucoamylase; that stretch reads TPELVTQQYT…MQKAHTEGVT (412 aa). The residue at position 1282 (Y1282) is a Sulfotyrosine. N-linked (GlcNAc...) asparagine glycosylation is found at N1323, N1364, and N1388. D1420 serves as the catalytic Nucleophile. E1423 is a catalytic residue. Residue D1526 is the Proton donor of the active site. The P-type 3 domain maps to 1850 to 1896; sequence WSIKIRDEEKIDCYPDENGDSAENCTARGCIWEASNSSGVPFCYFVN. 2 cysteine pairs are disulfide-bonded: C1862–C1879 and C1874–C1892. N2499, N2568, N2738, and N2743 each carry an N-linked (GlcNAc...) asparagine glycan.

It belongs to the glycosyl hydrolase 31 family. Monomer. Post-translationally, N- and O-glycosylated. In terms of processing, does not undergo intracellular or extracellular proteolytic cleavage. Sulfated. In terms of tissue distribution, broadly expressed. Highly expressed in small intestine. Expressed in granulocytes.

The protein resides in the apical cell membrane. The enzyme catalyses Hydrolysis of terminal, non-reducing (1-&gt;4)-linked alpha-D-glucose residues with release of alpha-D-glucose.. It carries out the reaction D-maltoheptaose + H2O = D-maltohexaose + alpha-D-glucose. It catalyses the reaction D-maltohexaose + H2O = D-maltopentaose + alpha-D-glucose. The catalysed reaction is D-maltopentaose + H2O = D-maltotetraose + alpha-D-glucose. The enzyme catalyses D-maltotetraose + H2O = D-maltotriose + alpha-D-glucose. It carries out the reaction D-maltotriose + H2O = D-maltose + alpha-D-glucose. It catalyses the reaction D-maltose + H2O = alpha-D-glucose + D-glucose. The catalysed reaction is nigerose + H2O = alpha-D-glucose + D-glucose. The enzyme catalyses kojibiose + H2O = alpha-D-glucose + D-glucose. It carries out the reaction isomaltose + H2O = alpha-D-glucose + D-glucose. It catalyses the reaction 6-O-alpha-D-glucopyranosyl-D-fructose + H2O = alpha-D-glucose + D-fructose. It functions in the pathway carbohydrate degradation. Its activity is regulated as follows. Down-regulated at high oligomaltose concentration as it occurs during the mealtime. Down-regulated by anti-diabetic drug acarbose. In terms of biological role, alpha-(1,4) exo-glucosidase involved in breakdown of dietary starch oligosaccharides in small intestine. Cleaves the non-reducing alpha-(1,4)-linked glucose residue in linear dextrins with retention of anomeric center stereochemistry. Mainly hydrolyzes short length oligomaltoses having two to seven glucose residues. Can cleave alpha-(1,2), alpha-(1,3) and alpha-(1,6) glycosidic linkages with lower efficiency, whereas beta glycosidic linkages are usually not hydrolyzed. In Homo sapiens (Human), this protein is Maltase-glucoamylase.